The primary structure comprises 476 residues: Dihydrolipoyl dehydrogenase (476 aa).

Residues 36–45 (EHQERLGGVC), Lys54, and Ala117 each bind FAD. A disulfide bridge links Cys45 with Cys50. Residues 182–186 (GGGII), Asp205, Val238, and 271–274 (AIGR) each bind NAD(+). Residues Asp314 and Ala322 each contribute to the FAD site. His446 acts as the Proton acceptor in catalysis.

It belongs to the class-I pyridine nucleotide-disulfide oxidoreductase family. Homodimer. Requires FAD as cofactor.

The protein localises to the cytoplasm. The enzyme catalyses N(6)-[(R)-dihydrolipoyl]-L-lysyl-[protein] + NAD(+) = N(6)-[(R)-lipoyl]-L-lysyl-[protein] + NADH + H(+). Functionally, lipoamide dehydrogenase is a component of the alpha-ketoacid dehydrogenase complexes. The protein is Dihydrolipoyl dehydrogenase (lpdA) of Buchnera aphidicola subsp. Schizaphis graminum (strain Sg).